Here is a 682-residue protein sequence, read N- to C-terminus: Methionine--tRNA ligase (682 aa).

A 'HIGH' region motif is present at residues 14 to 24 (PYANGSIHLGH). Zn(2+) contacts are provided by cysteine 145, cysteine 148, cysteine 158, and cysteine 161. Positions 331–335 (KMSKS) match the 'KMSKS' region motif. Position 334 (lysine 334) interacts with ATP. Residues 580 to 682 (AFAAIDLRVA…SGARPGQRIK (103 aa)) form the tRNA-binding domain.

It belongs to the class-I aminoacyl-tRNA synthetase family. MetG type 1 subfamily. Homodimer. It depends on Zn(2+) as a cofactor.

It localises to the cytoplasm. It catalyses the reaction tRNA(Met) + L-methionine + ATP = L-methionyl-tRNA(Met) + AMP + diphosphate. In terms of biological role, is required not only for elongation of protein synthesis but also for the initiation of all mRNA translation through initiator tRNA(fMet) aminoacylation. In Pseudomonas syringae pv. syringae (strain B728a), this protein is Methionine--tRNA ligase.